Reading from the N-terminus, the 158-residue chain is Cyclic pyranopterin monophosphate synthase (158 aa).

Residues 76-78 and 114-115 contribute to the substrate site; these read LCH and ME. Asp-129 is an active-site residue.

The protein belongs to the MoaC family. As to quaternary structure, homohexamer; trimer of dimers.

The catalysed reaction is (8S)-3',8-cyclo-7,8-dihydroguanosine 5'-triphosphate = cyclic pyranopterin phosphate + diphosphate. Its pathway is cofactor biosynthesis; molybdopterin biosynthesis. Its function is as follows. Catalyzes the conversion of (8S)-3',8-cyclo-7,8-dihydroguanosine 5'-triphosphate to cyclic pyranopterin monophosphate (cPMP). The polypeptide is Cyclic pyranopterin monophosphate synthase (Brucella anthropi (strain ATCC 49188 / DSM 6882 / CCUG 24695 / JCM 21032 / LMG 3331 / NBRC 15819 / NCTC 12168 / Alc 37) (Ochrobactrum anthropi)).